The sequence spans 437 residues: tRNA wybutosine-synthesizing protein 2 homolog (437 aa).

S-adenosyl-L-methionine is bound by residues Ser-208, Lys-215, Glu-255, and Asp-283–Asn-284. A compositionally biased stretch (polar residues) spans Ser-331–Asn-344. The disordered stretch occupies residues Ser-331–Ser-374.

Belongs to the class I-like SAM-binding methyltransferase superfamily. TRM5/TYW2 family.

It catalyses the reaction 4-demethylwyosine(37) in tRNA(Phe) + S-adenosyl-L-methionine = 4-demethyl-7-[(3S)-3-amino-3-carboxypropyl]wyosine(37) in tRNA(Phe) + S-methyl-5'-thioadenosine + H(+). Its pathway is tRNA modification; wybutosine-tRNA(Phe) biosynthesis. In terms of biological role, S-adenosyl-L-methionine-dependent transferase that acts as a component of the wybutosine biosynthesis pathway. Wybutosine is a hyper modified guanosine with a tricyclic base found at the 3'-position adjacent to the anticodon of eukaryotic phenylalanine tRNA. Catalyzes the transfer of the alpha-amino-alpha-carboxypropyl (acp) group from S-adenosyl-L-methionine to the C-7 position of 4-demethylwyosine (imG-14) to produce wybutosine-86. The protein is tRNA wybutosine-synthesizing protein 2 homolog (Trmt12) of Rattus norvegicus (Rat).